The sequence spans 341 residues: HTH-type transcriptional repressor PurR (341 aa).

An HTH lacI-type domain is found at 2-56; sequence ATIKDVAKHAGVSTTTVSHVINKTRFVAENTKAAVWAAIKELHYSPSAVARSLKV. Positions 4–23 form a DNA-binding region, H-T-H motif; the sequence is IKDVAKHAGVSTTTVSHVIN. Residues 48-56 mediate DNA binding; it reads SAVARSLKV. Residues Y73, R190, T192, F221, and D275 each coordinate hypoxanthine.

As to quaternary structure, homodimer.

It participates in purine metabolism; purine nucleotide biosynthesis [regulation]. In terms of biological role, is the main repressor of the genes involved in the de novo synthesis of purine nucleotides, regulating purB, purC, purEK, purF, purHD, purL, purMN and guaBA expression. PurR is allosterically activated to bind its cognate DNA by binding the purine corepressors, hypoxanthine or guanine, thereby effecting transcription repression. The sequence is that of HTH-type transcriptional repressor PurR from Yersinia pseudotuberculosis serotype O:1b (strain IP 31758).